A 607-amino-acid chain; its full sequence is Ceramide kinase (607 aa).

Residues 135–358 enclose the DAGKc domain; the sequence is DRPKSLMVFV…LDIAQVVRWK (224 aa). Residues 145 to 149, Thr-176, and 205 to 211 contribute to the ATP site; these read HPLCG and GDGLFNE. Position 204-207 (204-207) interacts with substrate; it reads GGDG. Asp-206 (proton donor/acceptor) is an active-site residue. The interval 247–297 is disordered; sequence NDLSNSELTGDDANAISGSSNTPDDHEPLLSTTRSTGLDISSSDSSDEPCN. Positions 276 to 286 are enriched in polar residues; the sequence is LSTTRSTGLDI. Ser-320 provides a ligand contact to ATP. Residues 454-461 carry the CXXXCXXC motif; the sequence is CRTNCLIC.

Requires Ca(2+) as cofactor. The cofactor is Mg(2+). As to expression, highly expressed in leaves and at lower levels in stems.

It carries out the reaction an N-acylsphing-4-enine + ATP = an N-acylsphing-4-enine 1-phosphate + ADP + H(+). Catalyzes specifically the phosphorylation of ceramide to form ceramide 1-phosphate. Possesses activity on ceramide analog (C6 synthetic ceramide) in vitro. Ceramide is a critical sphingolipid metabolite that induces programmed cell death (PCD) in plants and ceramide-1-phosphate has a PCD suppressive effect. Thus, ceramide phosphorylation plays a role in the modulation of PCD and CERK activity is crucial for the maintenance of cell viability. The protein is Ceramide kinase (CERK) of Oryza sativa subsp. japonica (Rice).